We begin with the raw amino-acid sequence, 541 residues long: Peptide chain release factor 3 (541 aa).

The 270-residue stretch at 14–283 folds into the tr-type G domain; that stretch reads EARRNFAIIS…AFLDYALKPG (270 aa). GTP-binding positions include 23–30, 91–95, and 145–148; these read SHPDAGKT, DTPGH, and NKLD.

This sequence belongs to the TRAFAC class translation factor GTPase superfamily. Classic translation factor GTPase family. PrfC subfamily.

It localises to the cytoplasm. In terms of biological role, increases the formation of ribosomal termination complexes and stimulates activities of RF-1 and RF-2. It binds guanine nucleotides and has strong preference for UGA stop codons. It may interact directly with the ribosome. The stimulation of RF-1 and RF-2 is significantly reduced by GTP and GDP, but not by GMP. The chain is Peptide chain release factor 3 from Acaryochloris marina (strain MBIC 11017).